The following is a 737-amino-acid chain: MKKESMSRIERRKAQQRKKTPVQWKKSTTLFSSALIVSSVGTPVALLPVTAEATEEQPTNAEVAQAPTTETGLVETPTTETTPGTTEQPTTDSSTTTESTTESSKETPTTPSTEQPTADSTTPVESGTTDSSVAEITPVAPSATESEAAPAVTPDDEVKVPEARVASAQTFSALSPTQSPSEFIAELARCAQPIAQANDLYASVMMAQAIVESGWGASTLSKAPNYNLFGIKGSYNGQSVYMDTWEYLNGKWLVKKEPFRKYPSYMESFQDNAHVLKTTSFQAGVYYYAGAWKSNTSSYRDATAWLTGRYATDPSYNAKLNNVITAYNLTQYDTPSSGGNTGGGTVNPGTGGSNNQSGTNTYYTVKSGDTLNKIAAQYGVSVANLRSWNGISGDLIFVGQKLIVKKGASGNTGGSGSGGSNNNQSGTNTYYTVKSGDTLNKIAAQYGVSVANLRSWNGISGDLIFVGQKLIVKKGASGNTGGSNNGGSNNNQSGTNTYYTIKSGDTLNKIAAQYGVSVANLRSWNGISGDLIFAGQKIIVKKGTSGNTGGSSNGGSNNNQSGTNTYYTIKSGDTLNKISAQFGVSVANLQAWNNISGSLIFAGQKIIVKKGANSGSTNTNKPTNNGGGATTSYTIKSGDTLNKISAQFGVSVANLRSWNGIKGDLIFAGQTIIVKKGASAGGNASSTNSASGKRHTVKSGDSLWGLSMQYGISIQKIKQLNGLSGDTIYIGQTLKVG.

The span at 1-13 (MKKESMSRIERRK) shows a compositional bias: basic and acidic residues. Disordered stretches follow at residues 1–28 (MKKE…KKST), 51–132 (AEAT…TDSS), and 335–360 (PSSG…SGTN). The signal sequence occupies residues 1 to 53 (MKKESMSRIERRKAQQRKKTPVQWKKSTTLFSSALIVSSVGTPVALLPVTAEA). The span at 67 to 117 (PTTETGLVETPTTETTPGTTEQPTTDSSTTTESTTESSKETPTTPSTEQPT) shows a compositional bias: low complexity. Residues 118–132 (ADSTTPVESGTTDSS) show a composition bias toward polar residues. Residues 339-352 (GNTGGGTVNPGTGG) are compositionally biased toward gly residues. A LysM 1 domain is found at 361–404 (TYYTVKSGDTLNKIAAQYGVSVANLRSWNGISGDLIFVGQKLIV). A disordered region spans residues 409-429 (SGNTGGSGSGGSNNNQSGTNT). The span at 410–419 (GNTGGSGSGG) shows a compositional bias: gly residues. A compositionally biased stretch (low complexity) spans 420–429 (SNNNQSGTNT). LysM domains lie at 429 to 472 (TYYT…KLIV), 497 to 540 (TYYT…KIIV), 565 to 608 (TYYT…KIIV), 631 to 674 (TSYT…TIIV), and 693 to 736 (KRHT…TLKV).

It belongs to the glycosyl hydrolase 73 family.

Its subcellular location is the secreted. In terms of biological role, hydrolyzes the cell wall of E.faecalis and M.lysodeikticus. May play an important role in cell wall growth and cell separation. The protein is Autolysin of Enterococcus faecalis (strain ATCC 700802 / V583).